Consider the following 400-residue polypeptide: Keratin, type I cytoskeletal 19 (400 aa).

The interval 1–79 is head; sequence MTSYSYRQSS…TASDGLLAGN (79 aa). Position 7 is an omega-N-methylarginine (R7). S14 and S22 each carry phosphoserine. R24 is modified (asymmetric dimethylarginine; alternate). Omega-N-methylarginine; alternate is present on R24. R32 carries the post-translational modification Omega-N-methylarginine. 2 positions are modified to phosphoserine: S35 and S40. Omega-N-methylarginine is present on residues R43 and R51. Residues S57 and S72 each carry the phosphoserine modification. Residues 80 to 115 form a coil 1A region; sequence EKLTMQNLNDRLASYLDKVRALEAANGELEVKIRDW. In terms of domain architecture, IF rod spans 80-391; it reads EKLTMQNLND…SLLEGQEDHY (312 aa). The interval 116–133 is linker 1; that stretch reads YQKQGPGPSRDYSHYYTT. The tract at residues 134-225 is coil 1B; it reads IQDLRDKILG…KNHEEEISTL (92 aa). Positions 226–248 are linker 12; the sequence is RGQVGGQVSVEVDSAPGTDLAKI. A necessary for interaction with PNN region spans residues 244 to 390; that stretch reads DLAKILSDMR…RSLLEGQEDH (147 aa). Residues 249 to 387 are coil 2; that stretch reads LSDMRSQYEV…ATYRSLLEGQ (139 aa). T323 bears the Phosphothreonine mark. The tract at residues 388 to 400 is rod-like helical tail; it reads EDHYNNLSASKVL. Y391 carries the phosphotyrosine modification. A phosphoserine mark is found at S395 and S397.

Belongs to the intermediate filament family. In terms of assembly, heterotetramer of two type I and two type II keratins. Interacts with PNN and the actin-binding domain of DMD. Interacts with HCV core protein. (Microbial infection) Interacts with hepatitis C virus/HCV core protein. In terms of tissue distribution, expressed in a defined zone of basal keratinocytes in the deep outer root sheath of hair follicles. Also observed in sweat gland and mammary gland ductal and secretory cells, bile ducts, gastrointestinal tract, bladder urothelium, oral epithelia, esophagus, ectocervical epithelium (at protein level). Expressed in epidermal basal cells, in nipple epidermis and a defined region of the hair follicle. Also seen in a subset of vascular wall cells in both the veins and artery of human umbilical cord, and in umbilical cord vascular smooth muscle. Observed in muscle fibers accumulating in the costameres of myoplasm at the sarcolemma in structures that contain dystrophin and spectrin.

Its function is as follows. Involved in the organization of myofibers. Together with KRT8, helps to link the contractile apparatus to dystrophin at the costameres of striated muscle. This Homo sapiens (Human) protein is Keratin, type I cytoskeletal 19 (KRT19).